The chain runs to 334 residues: MADNIAITVLGAGSYGSALAVSLARNGHPTLLWGHQEDHIKRLQADRENKKFLPNIKFPELLTPEVNLKVCLAATRNILLVVPSHVFALVLQQIKPFLTPQHRIAWATKGLEAKTGRLLQEVATDILGQHYPLAVISGPTFAMEVAKGLPTAVAVAGSESKFTQDIAALFHNNRNFRTYISDDFTAVQLGGAVKNVIAIGAGLADGLGFGANARTALITRGLAELTRLGVALGAKESSFMGMAGLGDLVLTCTDNQSRNRRFGLALGQGKGINAAQIEIGQVVEGYRNTEEVYNLSHRIGIEMPICEQIYYVLYQDKAVKQAAMDLLSRSPKDE.

4 residues coordinate NADPH: serine 14, tyrosine 15, histidine 35, and lysine 109. The sn-glycerol 3-phosphate site is built by lysine 109, glycine 138, and threonine 140. Residue alanine 142 coordinates NADPH. Sn-glycerol 3-phosphate is bound by residues lysine 194, aspartate 247, serine 257, arginine 258, and asparagine 259. Catalysis depends on lysine 194, which acts as the Proton acceptor. Arginine 258 lines the NADPH pocket. The NADPH site is built by valine 282 and glutamate 284.

Belongs to the NAD-dependent glycerol-3-phosphate dehydrogenase family.

It is found in the cytoplasm. The catalysed reaction is sn-glycerol 3-phosphate + NAD(+) = dihydroxyacetone phosphate + NADH + H(+). It carries out the reaction sn-glycerol 3-phosphate + NADP(+) = dihydroxyacetone phosphate + NADPH + H(+). The protein operates within membrane lipid metabolism; glycerophospholipid metabolism. In terms of biological role, catalyzes the reduction of the glycolytic intermediate dihydroxyacetone phosphate (DHAP) to sn-glycerol 3-phosphate (G3P), the key precursor for phospholipid synthesis. In Psychromonas ingrahamii (strain DSM 17664 / CCUG 51855 / 37), this protein is Glycerol-3-phosphate dehydrogenase [NAD(P)+].